We begin with the raw amino-acid sequence, 211 residues long: FMN-dependent NADH:quinone oxidoreductase (211 aa).

Residues 17–19 and 99–102 contribute to the FMN site; these read SYS and MWNF.

The protein belongs to the azoreductase type 1 family. As to quaternary structure, homodimer. It depends on FMN as a cofactor.

The catalysed reaction is 2 a quinone + NADH + H(+) = 2 a 1,4-benzosemiquinone + NAD(+). The enzyme catalyses N,N-dimethyl-1,4-phenylenediamine + anthranilate + 2 NAD(+) = 2-(4-dimethylaminophenyl)diazenylbenzoate + 2 NADH + 2 H(+). In terms of biological role, quinone reductase that provides resistance to thiol-specific stress caused by electrophilic quinones. Also exhibits azoreductase activity. Catalyzes the reductive cleavage of the azo bond in aromatic azo compounds to the corresponding amines. In Exiguobacterium sp. (strain ATCC BAA-1283 / AT1b), this protein is FMN-dependent NADH:quinone oxidoreductase.